A 310-amino-acid chain; its full sequence is ADP-L-glycero-D-manno-heptose-6-epimerase (310 aa).

NADP(+)-binding positions include 10 to 11 (FI), 31 to 32 (DN), Lys-38, Lys-53, 75 to 79 (EGACS), and Asn-92. Tyr-140 serves as the catalytic Proton acceptor. Residue Lys-144 participates in NADP(+) binding. Asn-169 contributes to the substrate binding site. Residues Val-170 and Lys-178 each contribute to the NADP(+) site. Lys-178 acts as the Proton acceptor in catalysis. Residues Ser-180, His-187, 201–204 (FEGS), Arg-209, and Tyr-272 each bind substrate.

It belongs to the NAD(P)-dependent epimerase/dehydratase family. HldD subfamily. Homopentamer. It depends on NADP(+) as a cofactor.

The catalysed reaction is ADP-D-glycero-beta-D-manno-heptose = ADP-L-glycero-beta-D-manno-heptose. The protein operates within nucleotide-sugar biosynthesis; ADP-L-glycero-beta-D-manno-heptose biosynthesis; ADP-L-glycero-beta-D-manno-heptose from D-glycero-beta-D-manno-heptose 7-phosphate: step 4/4. Catalyzes the interconversion between ADP-D-glycero-beta-D-manno-heptose and ADP-L-glycero-beta-D-manno-heptose via an epimerization at carbon 6 of the heptose. This Salmonella paratyphi C (strain RKS4594) protein is ADP-L-glycero-D-manno-heptose-6-epimerase.